The sequence spans 915 residues: Clathrin coat assembly protein AP180 (915 aa).

The region spanning 14-145 (QYSVTGSAVA…FSYRQMAFDF (132 aa)) is the ENTH domain. Disordered stretches follow at residues 285–326 (LEGK…DTSP), 391–425 (SVPSEAPISDPFAPEPSPPTTTTEPASASASATTA), and 497–522 (PETSAPVVTPTASTAPPVPATAPSPA). 3 positions are modified to phosphoserine: Ser-296, Ser-300, and Ser-306. The span at 302-324 (LSKSSPATTVTSPNSTPAKTIDT) shows a compositional bias: polar residues. O-linked (GlcNAc) threonine glycosylation occurs at Thr-310. Ser-313 is modified (phosphoserine). Thr-317 carries the post-translational modification Phosphothreonine. Composition is skewed to low complexity over residues 410–425 (TTTTEPASASASATTA) and 500–511 (SAPVVTPTASTA). The span at 512–522 (PPVPATAPSPA) shows a compositional bias: pro residues. 5 positions are modified to phosphoserine: Ser-594, Ser-600, Pro-627, Ser-640, and Ser-646. Low complexity predominate over residues 720–735 (TTPSTSSSSSFDPSGD). Positions 720–765 (TTPSTSSSSSFDPSGDLLMPTMAPSGQPAPVSMVPPSPAMSASKGL) are disordered. A Phosphoserine modification is found at Ser-775. Positions 817–855 (SAGVPPQGTVPPTSSVPPGAGAPSVGQPGAGYGMPPAGT) are disordered. Arg-873 is subject to Asymmetric dimethylarginine; alternate. Arg-873 bears the Omega-N-methylarginine; alternate mark. The disordered stretch occupies residues 875–915 (PFGAAAVPGTQLSPSPTPATQSPKKPPAKDPLADLNIKDFL). Residues 884 to 896 (TQLSPSPTPATQS) are compositionally biased toward polar residues. The span at 901–915 (PAKDPLADLNIKDFL) shows a compositional bias: basic and acidic residues.

Belongs to the PICALM/SNAP91 family. In terms of assembly, binds AP2A2. Interacts with AP2B1; clathrin competes with SNAP91. In terms of processing, thr-310 can be modified by the addition of N-acetylglucosamine which can be further phosphorylated. The form with phosphorylated O-linked N-acetylglucosamine is predominant in brain synaptosomes. There is no evidence for direct Thr-310 phosphorylation.

It is found in the cell membrane. It localises to the membrane. The protein localises to the coated pit. Its function is as follows. Adaptins are components of the adapter complexes which link clathrin to receptors in coated vesicles. Clathrin-associated protein complexes are believed to interact with the cytoplasmic tails of membrane proteins, leading to their selection and concentration. Binding of AP180 to clathrin triskelia induces their assembly into 60-70 nm coats. The chain is Clathrin coat assembly protein AP180 (Snap91) from Rattus norvegicus (Rat).